The sequence spans 106 residues: Large ribosomal subunit protein bL21 (106 aa).

This sequence belongs to the bacterial ribosomal protein bL21 family. In terms of assembly, part of the 50S ribosomal subunit. Contacts protein L20.

This protein binds to 23S rRNA in the presence of protein L20. The protein is Large ribosomal subunit protein bL21 of Chlamydia caviae (strain ATCC VR-813 / DSM 19441 / 03DC25 / GPIC) (Chlamydophila caviae).